Reading from the N-terminus, the 550-residue chain is Membrane protein insertase YidC (550 aa).

The helical transmembrane segment at Asn-6–Asp-26 threads the bilayer. Disordered regions lie at residues Ala-28–Ala-54 and Gln-111–Tyr-132. A compositionally biased stretch (low complexity) spans Lys-30–Val-52. Over residues Gln-111–Lys-127 the composition is skewed to polar residues. 4 helical membrane passes run Lys-346–Val-366, Leu-421–Leu-441, Leu-459–Ile-479, and Pro-500–Val-520.

This sequence belongs to the OXA1/ALB3/YidC family. Type 1 subfamily. As to quaternary structure, interacts with the Sec translocase complex via SecD. Specifically interacts with transmembrane segments of nascent integral membrane proteins during membrane integration.

The protein resides in the cell inner membrane. Its function is as follows. Required for the insertion and/or proper folding and/or complex formation of integral membrane proteins into the membrane. Involved in integration of membrane proteins that insert both dependently and independently of the Sec translocase complex, as well as at least some lipoproteins. Aids folding of multispanning membrane proteins. The polypeptide is Membrane protein insertase YidC (Cronobacter sakazakii (strain ATCC BAA-894) (Enterobacter sakazakii)).